The primary structure comprises 318 residues: tRNA(Ile)-lysidine synthase (318 aa).

26-31 provides a ligand contact to ATP; sequence SGGADS.

The protein belongs to the tRNA(Ile)-lysidine synthase family.

Its subcellular location is the cytoplasm. It catalyses the reaction cytidine(34) in tRNA(Ile2) + L-lysine + ATP = lysidine(34) in tRNA(Ile2) + AMP + diphosphate + H(+). In terms of biological role, ligates lysine onto the cytidine present at position 34 of the AUA codon-specific tRNA(Ile) that contains the anticodon CAU, in an ATP-dependent manner. Cytidine is converted to lysidine, thus changing the amino acid specificity of the tRNA from methionine to isoleucine. This Nocardia farcinica (strain IFM 10152) protein is tRNA(Ile)-lysidine synthase.